The following is a 469-amino-acid chain: 3-isopropylmalate dehydratase large subunit (469 aa).

The [4Fe-4S] cluster site is built by C347, C410, and C413.

This sequence belongs to the aconitase/IPM isomerase family. LeuC type 1 subfamily. Heterodimer of LeuC and LeuD. [4Fe-4S] cluster is required as a cofactor.

The enzyme catalyses (2R,3S)-3-isopropylmalate = (2S)-2-isopropylmalate. The protein operates within amino-acid biosynthesis; L-leucine biosynthesis; L-leucine from 3-methyl-2-oxobutanoate: step 2/4. Catalyzes the isomerization between 2-isopropylmalate and 3-isopropylmalate, via the formation of 2-isopropylmaleate. This chain is 3-isopropylmalate dehydratase large subunit, found in Burkholderia lata (strain ATCC 17760 / DSM 23089 / LMG 22485 / NCIMB 9086 / R18194 / 383).